Consider the following 956-residue polypeptide: MALAQESVFSVLYHLKHDPVDYWFHNWVLHGPMLFRSIGSGIVNFCTFQWVGWLIHLPIVRPDALASLFHEYDLPSSIEAGATPIRGMLTISQTVPTTAGMDPFLLGIMNSPALVISISTTTILCLRWLSLDLRWAAILAFFGNFLSNWLVVVAVLFGLDDLVARWYFLTPFTYVGSVLFIWYLVYKWIKVGLNFDLTSKGPFGMNPEVWRGLKIGMTGFTLGLCEQTVLFHKLIQPLSPHQLDLLHGFTSGTVRDHIVMHGAYVIGLFVGGVFLGSVILSVLIPAVDTWSEKKLLTQARFSLLLIMMTGASLPYYGFDYLLTRFADFAPDGGWRESTIFKPSLNKHLVSKNIHRKFTIADSTRRDTARPWREARNLFPERRWLLKVGTKSKAKLSTLPILDFVTHWRGGEDFVYSIVNPADFYRDLTKDPLQGKGKTLDKAVWKFVGNFFYQWKDEDLSRRKFQEQVKGIVDYARYRMVVINDIHVKGLVTTEQGDIRGVVDQHADMKLLQLPEAFVNQRLVKPPFLKHDWVLTIPKMSEQAKEERLLLKRQKMPPELSIEQQKTFFDSNAQKLFGTPNHYGLPEALDSSLESEEENLDPEEDIDPEIVDPLSSEESKTIDTLKVDLRTLSKNAKWVPKSVIQKQAAEKAEEERKAEEEKLLAVRNAKKKGLTVPKTEPKKGLTKQRQANPLGTPSLFYDKLHKRAEWNNEDFPHWGYMYHQLWKHRAYSHFMFRRLLEVDVDSMLARQPSRNFVTDADYQRLQYHQVALSSYHRSLRDYETSLWNVLLEPRANFFLAPNPLWRWDADWKVGFRAKSLENYVYDQRFKGTHRVVQRLFLLDTQFNPWDKTGPQFRYDQLLPLEEQDKGDRSNLWHEEIPREVRENVGAYDPFESQRVPPMFDPVPFYIGWDPILRKSVLTTSRLPKGTARVKLVLPGTQTPKWLKFIVSLESSDS.

6 helical membrane-spanning segments follow: residues serine 40–valine 60, phenylalanine 104–leucine 124, alanine 137–phenylalanine 157, tryptophan 166–tyrosine 186, tyrosine 264–isoleucine 284, and phenylalanine 301–leucine 321. The tract at residues asparagine 580–isoleucine 609 is disordered. Residues leucine 592 to isoleucine 609 show a composition bias toward acidic residues. Residues lysine 640–glycine 672 are a coiled coil.

The protein belongs to the ycf78 family.

The protein localises to the plastid. The protein resides in the chloroplast membrane. This is an uncharacterized protein from Nephroselmis olivacea (Green alga).